The primary structure comprises 107 residues: UPF0145 protein YbjQ (107 aa).

The protein belongs to the UPF0145 family.

This Shigella flexneri protein is UPF0145 protein YbjQ.